The following is a 678-amino-acid chain: Penicillin-binding protein activator LpoA (678 aa).

The N-terminal stretch at 1–26 (MVPSTFSRLKAARCLPVVLAALIFAG) is a signal peptide. C27 carries the N-palmitoyl cysteine lipid modification. A lipid anchor (S-diacylglycerol cysteine) is attached at C27. 2 disordered regions span residues 304-338 (AEQP…SVPV) and 495-530 (IALT…QFTN). The segment covering 513–529 (TTNNPTLQTTPTDDQFT) has biased composition (low complexity).

The protein belongs to the LpoA family. As to quaternary structure, interacts with PBP1a.

It localises to the cell outer membrane. Functionally, regulator of peptidoglycan synthesis that is essential for the function of penicillin-binding protein 1A (PBP1a). This chain is Penicillin-binding protein activator LpoA, found in Escherichia coli O6:H1 (strain CFT073 / ATCC 700928 / UPEC).